A 118-amino-acid chain; its full sequence is Cell division protein FtsB (118 aa).

Residues 1–6 (MRNWRW) lie on the Cytoplasmic side of the membrane. A helical transmembrane segment spans residues 7 to 24 (LLLVLAALLAWLQHRFWF). Topologically, residues 25 to 118 (GPGNSGEVRM…DLSQPRREKR (94 aa)) are periplasmic. Residues 30–66 (GEVRMLQVQIVQQHQENERLRQRNASLAAEVKNLKDG) adopt a coiled-coil conformation. A disordered region spans residues 98-118 (LPNDTSADHGVDLSQPRREKR). The span at 103–118 (SADHGVDLSQPRREKR) shows a compositional bias: basic and acidic residues.

It belongs to the FtsB family. As to quaternary structure, part of a complex composed of FtsB, FtsL and FtsQ.

The protein localises to the cell inner membrane. Its function is as follows. Essential cell division protein. May link together the upstream cell division proteins, which are predominantly cytoplasmic, with the downstream cell division proteins, which are predominantly periplasmic. This is Cell division protein FtsB from Xylella fastidiosa (strain M23).